Consider the following 337-residue polypeptide: Ferredoxin--NADP reductase (337 aa).

FAD is bound by residues E42, Q50, Y55, V97, F130, D292, and T333.

The protein belongs to the ferredoxin--NADP reductase type 2 family. In terms of assembly, homodimer. FAD serves as cofactor.

The enzyme catalyses 2 reduced [2Fe-2S]-[ferredoxin] + NADP(+) + H(+) = 2 oxidized [2Fe-2S]-[ferredoxin] + NADPH. This Streptococcus mutans serotype c (strain ATCC 700610 / UA159) protein is Ferredoxin--NADP reductase.